The chain runs to 84 residues: Cell division topological specificity factor (84 aa).

This sequence belongs to the MinE family.

Prevents the cell division inhibition by proteins MinC and MinD at internal division sites while permitting inhibition at polar sites. This ensures cell division at the proper site by restricting the formation of a division septum at the midpoint of the long axis of the cell. This Cupriavidus necator (strain ATCC 17699 / DSM 428 / KCTC 22496 / NCIMB 10442 / H16 / Stanier 337) (Ralstonia eutropha) protein is Cell division topological specificity factor.